A 321-amino-acid chain; its full sequence is MSERSRGRRFPLTLDAVVERKPAERQREKRISSGVNAVSLPTPARTASAERASSTPAPGPGPQRVAGVDAAVGAVAASAVQARTQAAHAAAGGMASDRARQALVARVQAAGVTDARVLAAIGRVPRHLFVDAGLASQAYEDAALPIGHQQTISKPSVVGRMIELLLRERPEPSAQAAQVPAQPLSRVLEIGTGCGYQAAVLSQVAGEVYSIERIRPLHEKAKANLRPLRVPNIRLHYGDGMLGLPKAAPFDAIIVAAAGLEVPQALLDQLAIGGRLIAPVATDRAGGPSQQLVLIERRGRFQFHSTALEGVFFVPLKSGTV.

Basic and acidic residues predominate over residues 21–31; the sequence is KPAERQREKRI. Residues 21–65 form a disordered region; it reads KPAERQREKRISSGVNAVSLPTPARTASAERASSTPAPGPGPQRV. A compositionally biased stretch (low complexity) spans 41 to 56; it reads PTPARTASAERASSTP. Serine 153 is an active-site residue.

Belongs to the methyltransferase superfamily. L-isoaspartyl/D-aspartyl protein methyltransferase family.

It localises to the cytoplasm. The catalysed reaction is [protein]-L-isoaspartate + S-adenosyl-L-methionine = [protein]-L-isoaspartate alpha-methyl ester + S-adenosyl-L-homocysteine. In terms of biological role, catalyzes the methyl esterification of L-isoaspartyl residues in peptides and proteins that result from spontaneous decomposition of normal L-aspartyl and L-asparaginyl residues. It plays a role in the repair and/or degradation of damaged proteins. This chain is Protein-L-isoaspartate O-methyltransferase, found in Ralstonia nicotianae (strain ATCC BAA-1114 / GMI1000) (Ralstonia solanacearum).